Reading from the N-terminus, the 358-residue chain is MTARLRPELADIPAYTPGKTVPGAIKIASNETVHGPLPSVRAAIEKATDQLNRYPDNGYLELREHLASHLDKNLGAGAFTPEQIAVGCGSVSLCQQLIQITSSVGDEVIFAWRSFEIYPLQVRTAGATPVQVPLRDHTHDLDAMLAAITDRTRLIFVCNPNNPTSTVVDPAALKRFVEAVPPHILVVIDEAYVEYIRGDQVPDSFGLVRAHPNVVVLRTFSKAYGLAGLRIGYAVADADIVTALGKVYVPFSATSISQAAAIASIDAADELLARTDQVVAERDRVTAALREAGFTLPPSQSNFVWLPLAERTLDFVRRAAENRLVVRPYGEDGVRVTIAAPHENDAFLEFARNWIGQP.

K222 is modified (N6-(pyridoxal phosphate)lysine).

It belongs to the class-II pyridoxal-phosphate-dependent aminotransferase family. As to quaternary structure, homodimer. The cofactor is pyridoxal 5'-phosphate.

It carries out the reaction an aromatic L-alpha-amino acid + 2-oxoglutarate = an aromatic oxo-acid + L-glutamate. Its function is as follows. Aminotransferase that catalyzes the conversion of aromatic amino acids and 2-oxoglutarate into corresponding aromatic oxo acids and L-glutamate. The sequence is that of Aromatic amino acid aminotransferase from Mycobacterium sp. (strain KMS).